Reading from the N-terminus, the 168-residue chain is Phosphopantetheine adenylyltransferase (168 aa).

Thr13 serves as a coordination point for substrate. Residues 13 to 14 (TF) and His21 contribute to the ATP site. 3 residues coordinate substrate: Lys45, Leu78, and Arg92. ATP-binding positions include 93–95 (GLR), Glu103, and 128–134 (TQFISSS).

It belongs to the bacterial CoaD family. As to quaternary structure, homohexamer. Requires Mg(2+) as cofactor.

Its subcellular location is the cytoplasm. The enzyme catalyses (R)-4'-phosphopantetheine + ATP + H(+) = 3'-dephospho-CoA + diphosphate. The protein operates within cofactor biosynthesis; coenzyme A biosynthesis; CoA from (R)-pantothenate: step 4/5. In terms of biological role, reversibly transfers an adenylyl group from ATP to 4'-phosphopantetheine, yielding dephospho-CoA (dPCoA) and pyrophosphate. The polypeptide is Phosphopantetheine adenylyltransferase (Wolbachia pipientis wMel).